The chain runs to 396 residues: tRNA(Met) cytidine acetate ligase (396 aa).

ATP-binding positions include 9 to 22 (IVEY…HLHH), G103, N154, and R179.

The protein belongs to the TmcAL family.

Its subcellular location is the cytoplasm. The enzyme catalyses cytidine(34) in elongator tRNA(Met) + acetate + ATP = N(4)-acetylcytidine(34) in elongator tRNA(Met) + AMP + diphosphate. Functionally, catalyzes the formation of N(4)-acetylcytidine (ac(4)C) at the wobble position of elongator tRNA(Met), using acetate and ATP as substrates. First activates an acetate ion to form acetyladenylate (Ac-AMP) and then transfers the acetyl group to tRNA to form ac(4)C34. In Fusobacterium nucleatum subsp. nucleatum (strain ATCC 25586 / DSM 15643 / BCRC 10681 / CIP 101130 / JCM 8532 / KCTC 2640 / LMG 13131 / VPI 4355), this protein is tRNA(Met) cytidine acetate ligase.